A 726-amino-acid chain; its full sequence is 1,4-alpha-glucan branching enzyme GlgB (726 aa).

Aspartate 407 (nucleophile) is an active-site residue. Glutamate 460 (proton donor) is an active-site residue.

This sequence belongs to the glycosyl hydrolase 13 family. GlgB subfamily. In terms of assembly, monomer.

It catalyses the reaction Transfers a segment of a (1-&gt;4)-alpha-D-glucan chain to a primary hydroxy group in a similar glucan chain.. It functions in the pathway glycan biosynthesis; glycogen biosynthesis. In terms of biological role, catalyzes the formation of the alpha-1,6-glucosidic linkages in glycogen by scission of a 1,4-alpha-linked oligosaccharide from growing alpha-1,4-glucan chains and the subsequent attachment of the oligosaccharide to the alpha-1,6 position. The polypeptide is 1,4-alpha-glucan branching enzyme GlgB (Hydrogenovibrio crunogenus (strain DSM 25203 / XCL-2) (Thiomicrospira crunogena)).